The sequence spans 510 residues: Beta-glucosidase 12 (510 aa).

The signal sequence occupies residues 1 to 24 (MAAAGAMPGGLLLTFLLLAVVASG). Residue Gln53 coordinates a beta-D-glucoside. N-linked (GlcNAc...) asparagine glycosylation is present at Asn122. A beta-D-glucoside contacts are provided by residues His157 and 202–203 (NE). Glu203 (proton donor) is an active-site residue. Disulfide bonds link Cys208–Cys243 and Cys222–Cys230. N-linked (GlcNAc...) asparagine glycosylation is present at Asn229. An a beta-D-glucoside-binding site is contributed by Tyr346. N-linked (GlcNAc...) asparagine glycans are attached at residues Asn361 and Asn371. Glu417 serves as a coordination point for a beta-D-glucoside. The active-site Nucleophile is Glu417. N-linked (GlcNAc...) asparagine glycosylation is present at Asn425. A beta-D-glucoside contacts are provided by residues Trp466, 473–474 (EW), and Phe482.

It belongs to the glycosyl hydrolase 1 family.

It localises to the secreted. It catalyses the reaction Hydrolysis of terminal, non-reducing beta-D-glucosyl residues with release of beta-D-glucose.. In terms of biological role, hydrolyzes p-nitrophenyl beta-D-glucoside, p-nitrophenyl beta-D-galactoside, p-nitrophenyl beta-D-xyloside, p-nitrophenyl beta-D-fucoside, p-nitrophenyl beta-L-arabinoside, cello-oligosaccharides and laminaribiose. This Oryza sativa subsp. japonica (Rice) protein is Beta-glucosidase 12.